The chain runs to 147 residues: Ubiquitin-conjugating enzyme E2-17 kDa (147 aa).

One can recognise a UBC core domain in the interval 1 to 147; that stretch reads MALKRINKEL…AREWTRKYAM (147 aa). Cys-85 serves as the catalytic Glycyl thioester intermediate.

The protein belongs to the ubiquitin-conjugating enzyme family.

The catalysed reaction is S-ubiquitinyl-[E1 ubiquitin-activating enzyme]-L-cysteine + [E2 ubiquitin-conjugating enzyme]-L-cysteine = [E1 ubiquitin-activating enzyme]-L-cysteine + S-ubiquitinyl-[E2 ubiquitin-conjugating enzyme]-L-cysteine.. It participates in protein modification; protein ubiquitination. In terms of biological role, catalyzes the covalent attachment of ubiquitin to other proteins. Mediates the selective degradation of short-lived and abnormal proteins. Required for proper telomere behavior during cell divisions and possibly for ubiquitination of proteins involved in postmeiotic stages of spermatogenesis. Deletion mutations are lethal in homozygotes. In Drosophila melanogaster (Fruit fly), this protein is Ubiquitin-conjugating enzyme E2-17 kDa (eff).